A 235-amino-acid chain; its full sequence is MNFVAFERAKQGTGASRRLRNSGKTPGIVYGGSAEPQMIELDHNALWHALKKEAFHSSVLDMEVAGKTDKVLLRDVQYHPFKQCVLHIDFQRVDDKTRLHMKVPLHYSGSEESNAVKVDKCMVNLIVNELDVTCMPSDLPEFIAVDLSKLEKGTSLHLKDIKLPRGVTPVIRGGQHNPALVSVVPPVVVLEAPVADAAPAPVAEAKGKGKAAKPAATAKPAAAAAKPAAKPKAKK.

The interval 201 to 235 is disordered; that stretch reads PVAEAKGKGKAAKPAATAKPAAAAAKPAAKPKAKK. Over residues 212 to 228 the composition is skewed to low complexity; that stretch reads AKPAATAKPAAAAAKPA.

Belongs to the bacterial ribosomal protein bL25 family. CTC subfamily. Part of the 50S ribosomal subunit; part of the 5S rRNA/L5/L18/L25 subcomplex. Contacts the 5S rRNA. Binds to the 5S rRNA independently of L5 and L18.

In terms of biological role, this is one of the proteins that binds to the 5S RNA in the ribosome where it forms part of the central protuberance. This Verminephrobacter eiseniae (strain EF01-2) protein is Large ribosomal subunit protein bL25.